We begin with the raw amino-acid sequence, 121 residues long: DNA-directed RNA polymerase subunit omega (121 aa).

A disordered region spans residues 95-121 (DGDAANDLQGEEDDLGLGLDEAEDLGF). Acidic residues predominate over residues 103 to 121 (QGEEDDLGLGLDEAEDLGF).

It belongs to the RNA polymerase subunit omega family. In terms of assembly, the RNAP catalytic core consists of 2 alpha, 1 beta, 1 beta' and 1 omega subunit. When a sigma factor is associated with the core the holoenzyme is formed, which can initiate transcription.

It catalyses the reaction RNA(n) + a ribonucleoside 5'-triphosphate = RNA(n+1) + diphosphate. Its function is as follows. Promotes RNA polymerase assembly. Latches the N- and C-terminal regions of the beta' subunit thereby facilitating its interaction with the beta and alpha subunits. The protein is DNA-directed RNA polymerase subunit omega of Magnetococcus marinus (strain ATCC BAA-1437 / JCM 17883 / MC-1).